The chain runs to 44 residues: Photosystem I reaction center subunit IX (44 aa).

The chain crosses the membrane as a helical span at residues 9–29 (FMRSAPIVAAIWISLTAGIII).

Belongs to the PsaJ family.

The protein localises to the cellular thylakoid membrane. May help in the organization of the PsaE and PsaF subunits. The sequence is that of Photosystem I reaction center subunit IX from Prochlorococcus marinus (strain MIT 9515).